The chain runs to 330 residues: GMP reductase (330 aa).

The Thioimidate intermediate role is filled by Cys180. 209–232 serves as a coordination point for NADP(+); the sequence is LIADGGIRHNGDIAKSVRFGASMV.

Belongs to the IMPDH/GMPR family. GuaC type 2 subfamily.

The catalysed reaction is IMP + NH4(+) + NADP(+) = GMP + NADPH + 2 H(+). Functionally, catalyzes the irreversible NADPH-dependent deamination of GMP to IMP. It functions in the conversion of nucleobase, nucleoside and nucleotide derivatives of G to A nucleotides, and in maintaining the intracellular balance of A and G nucleotides. In Lactobacillus johnsonii (strain CNCM I-12250 / La1 / NCC 533), this protein is GMP reductase.